The chain runs to 536 residues: Membrane protein insertase YidC (536 aa).

The next 5 membrane-spanning stretches (helical) occupy residues 3-23 (LQRN…WKTW), 346-366 (ICGN…GITF), 417-437 (GGCF…YMLI), 454-474 (LSDQ…MFFI), and 494-514 (IPIL…LYYL).

The protein belongs to the OXA1/ALB3/YidC family. Type 1 subfamily. Interacts with the Sec translocase complex via SecD. Specifically interacts with transmembrane segments of nascent integral membrane proteins during membrane integration.

It localises to the cell membrane. In terms of biological role, required for the insertion and/or proper folding and/or complex formation of integral membrane proteins into the membrane. Involved in integration of membrane proteins that insert both dependently and independently of the Sec translocase complex, as well as at least some lipoproteins. Aids folding of multispanning membrane proteins. The protein is Membrane protein insertase YidC of Buchnera aphidicola subsp. Baizongia pistaciae (strain Bp).